The primary structure comprises 220 residues: Ribose-5-phosphate isomerase A (220 aa).

Residues 28–31 (TGST), 81–84 (DGAD), and 94–97 (KGGG) contribute to the substrate site. The active-site Proton acceptor is Glu-103. Lys-121 provides a ligand contact to substrate.

Belongs to the ribose 5-phosphate isomerase family. As to quaternary structure, homodimer.

It carries out the reaction aldehydo-D-ribose 5-phosphate = D-ribulose 5-phosphate. It functions in the pathway carbohydrate degradation; pentose phosphate pathway; D-ribose 5-phosphate from D-ribulose 5-phosphate (non-oxidative stage): step 1/1. Its function is as follows. Catalyzes the reversible conversion of ribose-5-phosphate to ribulose 5-phosphate. The sequence is that of Ribose-5-phosphate isomerase A from Shewanella baltica (strain OS185).